The following is an 87-amino-acid chain: Small ribosomal subunit protein uS15c (87 aa).

Belongs to the universal ribosomal protein uS15 family. In terms of assembly, part of the 30S ribosomal subunit.

It is found in the plastid. It localises to the chloroplast. The polypeptide is Small ribosomal subunit protein uS15c (rps15) (Oenothera glazioviana (Large-flowered evening primrose)).